The primary structure comprises 249 residues: Precorrin-4 C(11)-methyltransferase (249 aa).

It belongs to the precorrin methyltransferase family.

The catalysed reaction is precorrin-4 + S-adenosyl-L-methionine = precorrin-5 + S-adenosyl-L-homocysteine. The protein operates within cofactor biosynthesis; adenosylcobalamin biosynthesis; cob(II)yrinate a,c-diamide from precorrin-2 (aerobic route): step 4/10. Functionally, catalyzes the methylation of C-11 in precorrin-4 to form precorrin-5. The chain is Precorrin-4 C(11)-methyltransferase (cobM) from Rhodococcus erythropolis (Arthrobacter picolinophilus).